The primary structure comprises 2266 residues: RNA1 polyprotein (2266 aa).

Residues 566–1158 lie on the Cytoplasmic side of the membrane; sequence LCTALAAGIF…AGRDYLVQNG (593 aa). The region spanning 751–917 is the SF3 helicase domain; it reads MKDLVELHKR…PGVIYDPENP (167 aa). 781-788 lines the ATP pocket; the sequence is GQRHCGKS. A helical transmembrane segment spans residues 1159–1179; the sequence is CGILMIAAALILILVSGWGFW. Residues 1180 to 1205 are Lumenal-facing; sequence KLFVGLFSGTMSLGAAITGMSAVDIK. The Peptidase C3 domain maps to 1229–1438; the sequence is AYARSQAGDG…WADIMPPNSL (210 aa). Catalysis depends on for picornain 3C-like protease activity residues His1272, Glu1310, and Cys1402. Residues 1715-1843 form the RdRp catalytic domain; it reads NEAINCDYSG…SVSPSIASWF (129 aa).

It belongs to the nepoviruses RNA1 polyprotein family. In terms of processing, specific enzymatic cleavages by picornain 3C-like protease in vivo yield mature proteins. Picornain 3C-like protease is autocatalytically processed. Post-translationally, VPg is uridylylated by the polymerase and is covalently linked to the 5'-end of genomic RNA. This uridylylated form acts as a nucleotide-peptide primer for the polymerase.

It localises to the host endoplasmic reticulum lumen. It is found in the host endoplasmic reticulum membrane. It catalyses the reaction RNA(n) + a ribonucleoside 5'-triphosphate = RNA(n+1) + diphosphate. Its function is as follows. Picornain 3C-like protease is a thiol protease that cleaves the P1 and P2 polyproteins. This chain is RNA1 polyprotein, found in Tomato black ring virus (strain MJ) (TBRV).